Reading from the N-terminus, the 3655-residue chain is NuA4 acetyltransferase complex subunit Tra2 (3655 aa).

Residues Ser8–Lys2459 form an HEAT region. 26 HEAT repeats span residues Gln46–Arg89, Gln94–Phe131, Thr149–Gln188, Pro230–Phe268, Leu300–Thr338, Ser374–Leu412, Phe438–Ser475, Ile606–Ser643, Lys644–Ser683, Ser735–Leu772, Pro783–Asp820, Pro828–Lys867, Ala1100–Ser1141, Asp1147–Arg1184, Glu1193–Thr1230, Arg1429–Leu1470, Asn1665–Lys1704, Gly1709–Ala1746, Ile1753–Val1790, Gln1808–Ser1846, Glu1891–Leu1934, Ser1973–Asn2011, Glu2036–Thr2073, Asp2120–Val2157, Asp2183–Val2221, and Asp2401–Pro2438. Residues Thr2460 to Leu3655 form a head region. The 562-residue stretch at Leu2484 to Asp3045 folds into the FAT domain. The segment at Arg3059 to Lys3105 is disordered. A compositionally biased stretch (basic and acidic residues) spans Arg3063–Asp3077. Residues Leu3078–Ser3092 are compositionally biased toward low complexity. The 341-residue stretch at Val3285 to Leu3625 folds into the PI3K/PI4K catalytic domain. Residues Val3291–Cys3297 are G-loop. The interval Asn3491–Lys3499 is catalytic loop. The tract at residues Ser3511–Thr3536 is activation loop. The region spanning Glu3623 to Leu3655 is the FATC domain.

It belongs to the PI3/PI4-kinase family. TRA1 subfamily. As to quaternary structure, component of the NuA4 acetyltransferase complex. Tra1 is the scaffold subunit for binding to a variety of transcription activators or transcription factors to recruit NuA4 for targeted gene activation. Requires Hsp90 and its co-chaperone, the Triple-T complex (TTT), for its incorporation into NuA4. Interacts with tel2.

Its function is as follows. Component of the NuA4 histone H4/H2A acetyltransferase involved in transcription and DNA repair. This Schizosaccharomyces pombe (strain 972 / ATCC 24843) (Fission yeast) protein is NuA4 acetyltransferase complex subunit Tra2.